The sequence spans 134 residues: Small ribosomal subunit protein uS8c (134 aa).

This sequence belongs to the universal ribosomal protein uS8 family. In terms of assembly, part of the 30S ribosomal subunit.

It is found in the plastid. Its subcellular location is the chloroplast. In terms of biological role, one of the primary rRNA binding proteins, it binds directly to 16S rRNA central domain where it helps coordinate assembly of the platform of the 30S subunit. This chain is Small ribosomal subunit protein uS8c (rps8), found in Arabis hirsuta (Hairy rock-cress).